We begin with the raw amino-acid sequence, 434 residues long: Septin-6 (434 aa).

Alanine 2 is subject to N-acetylalanine. Position 27 is a phosphoserine (serine 27). The region spanning 39–305 is the Septin-type G domain; the sequence is QGFCFNILCV…ELYRRCKLEE (267 aa). Positions 49–56 are G1 motif; the sequence is GETGLGKS. Residues 49 to 56, glycine 104, 185 to 193, glycine 239, and arginine 254 contribute to the GTP site; these read GETGLGKS and KADAISKSE. Residues 101-104 form a G3 motif region; that stretch reads STVG. The interval 184 to 187 is G4 motif; sequence AKAD. Residues 321-409 are a coiled coil; sequence QETYEAKRNE…KTAAELLQSQ (89 aa). Lysine 367 bears the N6-acetyllysine mark. Residues 405–434 are disordered; it reads LLQSQGSQAGGSQTLKRDKEKKNNPWLCTE. Over residues 407-417 the composition is skewed to low complexity; it reads QSQGSQAGGSQ. Serine 416 carries the post-translational modification Phosphoserine. Threonine 418 bears the Phosphothreonine mark.

It belongs to the TRAFAC class TrmE-Era-EngA-EngB-Septin-like GTPase superfamily. Septin GTPase family. Septins polymerize into heterooligomeric protein complexes that form filaments, and associate with cellular membranes, actin filaments and microtubules. GTPase activity is required for filament formation. Filaments are assembled from asymmetrical heterotrimers, composed of SEPTIN2, SEPTIN6 and SEPTIN7 that associate head-to-head to form a hexameric unit. Within the trimer, directly interacts with SEPTIN2 and SEPTIN7. Also interacts with SEPTIN9 and SEPTIN12. Interaction with SEPTIN12 alters filament structure. Component of a septin core octameric complex consisting of SEPTIN12, SEPTIN7, SEPTIN6 and SEPTIN2 or SEPTIN4 in the order 12-7-6-2-2-6-7-12 or 12-7-6-4-4-6-7-12 and located in the sperm annulus. Interacts with SOCS7. Interacts with HNRNPA1. In terms of assembly, (Microbial infection) Interacts with HCV NS5B. As to expression, widely expressed.

It localises to the cytoplasm. The protein resides in the cytoskeleton. Its subcellular location is the spindle. It is found in the chromosome. The protein localises to the centromere. It localises to the kinetochore. The protein resides in the cleavage furrow. Its subcellular location is the midbody. It is found in the cell projection. The protein localises to the cilium. It localises to the flagellum. Filament-forming cytoskeletal GTPase. Required for normal organization of the actin cytoskeleton. Involved in cytokinesis. May play a role in HCV RNA replication. Forms a filamentous structure with SEPTIN12, SEPTIN6, SEPTIN2 and probably SEPTIN4 at the sperm annulus which is required for the structural integrity and motility of the sperm tail during postmeiotic differentiation. This chain is Septin-6, found in Homo sapiens (Human).